The chain runs to 122 residues: Large ribosomal subunit protein uL14 (122 aa).

The protein belongs to the universal ribosomal protein uL14 family. Part of the 50S ribosomal subunit. Forms a cluster with proteins L3 and L19. In the 70S ribosome, L14 and L19 interact and together make contacts with the 16S rRNA in bridges B5 and B8.

Binds to 23S rRNA. Forms part of two intersubunit bridges in the 70S ribosome. The sequence is that of Large ribosomal subunit protein uL14 from Sphingopyxis alaskensis (strain DSM 13593 / LMG 18877 / RB2256) (Sphingomonas alaskensis).